Consider the following 272-residue polypeptide: Protein FAM210A (272 aa).

The 113-residue stretch at aspartate 117–lysine 229 folds into the DUF1279 domain. Residues valine 136–alanine 156 traverse the membrane as a helical segment. Residues lysine 229–valine 271 adopt a coiled-coil conformation. A disordered region spans residues lysine 246–glutamate 272.

The protein belongs to the FAM210 family. In terms of assembly, interacts with ATAD3A.

The protein resides in the membrane. Its subcellular location is the mitochondrion. It is found in the cytoplasm. In terms of biological role, may play a role in the structure and strength of both muscle and bone. In Pongo abelii (Sumatran orangutan), this protein is Protein FAM210A (FAM210A).